The following is a 204-amino-acid chain: ATP-dependent Clp protease proteolytic subunit (204 aa).

Residue Ser-101 is the Nucleophile of the active site. His-126 is an active-site residue.

It belongs to the peptidase S14 family. Fourteen ClpP subunits assemble into 2 heptameric rings which stack back to back to give a disk-like structure with a central cavity, resembling the structure of eukaryotic proteasomes.

Its subcellular location is the cytoplasm. It carries out the reaction Hydrolysis of proteins to small peptides in the presence of ATP and magnesium. alpha-casein is the usual test substrate. In the absence of ATP, only oligopeptides shorter than five residues are hydrolyzed (such as succinyl-Leu-Tyr-|-NHMec, and Leu-Tyr-Leu-|-Tyr-Trp, in which cleavage of the -Tyr-|-Leu- and -Tyr-|-Trp bonds also occurs).. Cleaves peptides in various proteins in a process that requires ATP hydrolysis. Has a chymotrypsin-like activity. Plays a major role in the degradation of misfolded proteins. In Deinococcus radiodurans (strain ATCC 13939 / DSM 20539 / JCM 16871 / CCUG 27074 / LMG 4051 / NBRC 15346 / NCIMB 9279 / VKM B-1422 / R1), this protein is ATP-dependent Clp protease proteolytic subunit.